The chain runs to 189 residues: Xanthine phosphoribosyltransferase (189 aa).

L20 and N27 together coordinate xanthine. A128–A132 is a binding site for 5-phospho-alpha-D-ribose 1-diphosphate. K156 is a xanthine binding site.

It belongs to the purine/pyrimidine phosphoribosyltransferase family. Xpt subfamily. Homodimer.

The protein resides in the cytoplasm. It catalyses the reaction XMP + diphosphate = xanthine + 5-phospho-alpha-D-ribose 1-diphosphate. Its pathway is purine metabolism; XMP biosynthesis via salvage pathway; XMP from xanthine: step 1/1. Its function is as follows. Converts the preformed base xanthine, a product of nucleic acid breakdown, to xanthosine 5'-monophosphate (XMP), so it can be reused for RNA or DNA synthesis. In Pseudomonas savastanoi pv. phaseolicola (strain 1448A / Race 6) (Pseudomonas syringae pv. phaseolicola (strain 1448A / Race 6)), this protein is Xanthine phosphoribosyltransferase.